The chain runs to 191 residues: Protein Ves (191 aa).

Belongs to the Ves family.

The polypeptide is Protein Ves (Escherichia coli (strain UTI89 / UPEC)).